The sequence spans 357 residues: Fluoren-9-ol dehydrogenase (357 aa).

Residues 36–67 (VTGGARGIGRSLCEGLLRAGAKVVAADLTWDD) and D87 each bind NADP(+). Y198 functions as the Proton acceptor in the catalytic mechanism. K202 is a binding site for NADP(+).

Belongs to the short-chain dehydrogenases/reductases (SDR) family.

The enzyme catalyses 9H-fluoren-9-ol + NADP(+) = 9H-fluoren-9-one + NADPH + H(+). It catalyses the reaction 9H-fluoren-9-ol + NAD(+) = 9H-fluoren-9-one + NADH + H(+). It participates in aromatic compound metabolism. In terms of biological role, catalyzes the dehydrogenation of both 9-fluorenol and 1,1a-dihydroxy-1-hydro-9-fluorenone to produce 9-fluorenone and 2'-carboxy-2,3- dihydroxybiphenyl, respectively. This Terrabacter sp. (strain DBF63) protein is Fluoren-9-ol dehydrogenase.